The primary structure comprises 255 residues: Hydroxyacylglutathione hydrolase (255 aa).

Zn(2+) contacts are provided by His56, His58, Asp60, His61, His114, Asp133, and His171.

It belongs to the metallo-beta-lactamase superfamily. Glyoxalase II family. Monomer. Zn(2+) serves as cofactor.

It carries out the reaction an S-(2-hydroxyacyl)glutathione + H2O = a 2-hydroxy carboxylate + glutathione + H(+). It functions in the pathway secondary metabolite metabolism; methylglyoxal degradation; (R)-lactate from methylglyoxal: step 2/2. Functionally, thiolesterase that catalyzes the hydrolysis of S-D-lactoyl-glutathione to form glutathione and D-lactic acid. The protein is Hydroxyacylglutathione hydrolase of Ruegeria pomeroyi (strain ATCC 700808 / DSM 15171 / DSS-3) (Silicibacter pomeroyi).